The primary structure comprises 84 residues: Small ribosomal subunit protein bS18 (84 aa).

This sequence belongs to the bacterial ribosomal protein bS18 family. Part of the 30S ribosomal subunit. Forms a tight heterodimer with protein bS6.

Functionally, binds as a heterodimer with protein bS6 to the central domain of the 16S rRNA, where it helps stabilize the platform of the 30S subunit. The polypeptide is Small ribosomal subunit protein bS18 (Clostridium kluyveri (strain NBRC 12016)).